The primary structure comprises 419 residues: Enolase (419 aa).

Gln161 contacts (2R)-2-phosphoglycerate. Glu205 acts as the Proton donor in catalysis. Asp240, Glu283, and Asp309 together coordinate Mg(2+). 4 residues coordinate (2R)-2-phosphoglycerate: Lys334, Arg363, Ser364, and Lys385. The Proton acceptor role is filled by Lys334.

The protein belongs to the enolase family. Mg(2+) serves as cofactor.

It localises to the cytoplasm. Its subcellular location is the secreted. The protein localises to the cell surface. The catalysed reaction is (2R)-2-phosphoglycerate = phosphoenolpyruvate + H2O. It participates in carbohydrate degradation; glycolysis; pyruvate from D-glyceraldehyde 3-phosphate: step 4/5. Its function is as follows. Catalyzes the reversible conversion of 2-phosphoglycerate (2-PG) into phosphoenolpyruvate (PEP). It is essential for the degradation of carbohydrates via glycolysis. The polypeptide is Enolase (Saccharolobus solfataricus (strain ATCC 35092 / DSM 1617 / JCM 11322 / P2) (Sulfolobus solfataricus)).